We begin with the raw amino-acid sequence, 382 residues long: Lipid-A-disaccharide synthase (382 aa).

This sequence belongs to the LpxB family.

It catalyses the reaction 2-N,3-O-bis[(3R)-3-hydroxytetradecanoyl]-alpha-D-glucosaminyl 1-phosphate + UDP-2-N,3-O-bis[(3R)-3-hydroxytetradecanoyl]-alpha-D-glucosamine = lipid A disaccharide (E. coli) + UDP + H(+). The enzyme catalyses a lipid X + a UDP-2-N,3-O-bis[(3R)-3-hydroxyacyl]-alpha-D-glucosamine = a lipid A disaccharide + UDP + H(+). Its pathway is glycolipid biosynthesis; lipid IV(A) biosynthesis; lipid IV(A) from (3R)-3-hydroxytetradecanoyl-[acyl-carrier-protein] and UDP-N-acetyl-alpha-D-glucosamine: step 5/6. Its function is as follows. Condensation of UDP-2,3-diacylglucosamine and 2,3-diacylglucosamine-1-phosphate to form lipid A disaccharide, a precursor of lipid A, a phosphorylated glycolipid that anchors the lipopolysaccharide to the outer membrane of the cell. The protein is Lipid-A-disaccharide synthase of Escherichia coli (strain 55989 / EAEC).